The chain runs to 310 residues: Glycerol-3-phosphate dehydrogenase [NAD(P)+] (310 aa).

Tryptophan 19, arginine 39, arginine 40, and lysine 87 together coordinate NADPH. Residues lysine 87 and glycine 115 each contribute to the sn-glycerol 3-phosphate site. Serine 119 contacts NADPH. Sn-glycerol 3-phosphate is bound by residues lysine 170, aspartate 223, serine 233, arginine 234, and asparagine 235. Catalysis depends on lysine 170, which acts as the Proton acceptor. An NADPH-binding site is contributed by arginine 234. Glutamate 260 is an NADPH binding site.

It belongs to the NAD-dependent glycerol-3-phosphate dehydrogenase family.

The protein localises to the cytoplasm. The catalysed reaction is sn-glycerol 3-phosphate + NAD(+) = dihydroxyacetone phosphate + NADH + H(+). It catalyses the reaction sn-glycerol 3-phosphate + NADP(+) = dihydroxyacetone phosphate + NADPH + H(+). Its pathway is membrane lipid metabolism; glycerophospholipid metabolism. Its function is as follows. Catalyzes the reduction of the glycolytic intermediate dihydroxyacetone phosphate (DHAP) to sn-glycerol 3-phosphate (G3P), the key precursor for phospholipid synthesis. The sequence is that of Glycerol-3-phosphate dehydrogenase [NAD(P)+] from Synechococcus sp. (strain JA-3-3Ab) (Cyanobacteria bacterium Yellowstone A-Prime).